Reading from the N-terminus, the 217-residue chain is Somatotropin (217 aa).

The N-terminal stretch at 1 to 24 (MAAGSWTSLLLAFTLLCLPQLREA) is a signal peptide. Position 44 (His44) interacts with Zn(2+). Cys79 and Cys191 form a disulfide bridge. Ser132 is subject to Phosphoserine. A Zn(2+)-binding site is contributed by Glu200. Cys208 and Cys215 are oxidised to a cystine.

This sequence belongs to the somatotropin/prolactin family.

Its subcellular location is the secreted. Its function is as follows. Plays an important role in growth control. Its major role in stimulating body growth is to stimulate the liver and other tissues to secrete IGF1. It stimulates both the differentiation and proliferation of myoblasts. It also stimulates amino acid uptake and protein synthesis in muscle and other tissues. The sequence is that of Somatotropin (GH1) from Callithrix jacchus (White-tufted-ear marmoset).